The primary structure comprises 384 residues: S-adenosylmethionine synthase (384 aa).

His-15 provides a ligand contact to ATP. Position 17 (Asp-17) interacts with Mg(2+). Glu-43 contacts K(+). Glu-56 and Gln-99 together coordinate L-methionine. Positions 99-109 (QSPDINQGVDR) are flexible loop. Residues 164–166 (DAK), 230–231 (RF), Asp-239, 245–246 (RK), Ala-262, and Lys-266 each bind ATP. An L-methionine-binding site is contributed by Asp-239. Lys-270 serves as a coordination point for L-methionine.

The protein belongs to the AdoMet synthase family. In terms of assembly, homotetramer; dimer of dimers. Mg(2+) is required as a cofactor. Requires K(+) as cofactor.

Its subcellular location is the cytoplasm. It carries out the reaction L-methionine + ATP + H2O = S-adenosyl-L-methionine + phosphate + diphosphate. It functions in the pathway amino-acid biosynthesis; S-adenosyl-L-methionine biosynthesis; S-adenosyl-L-methionine from L-methionine: step 1/1. Functionally, catalyzes the formation of S-adenosylmethionine (AdoMet) from methionine and ATP. The overall synthetic reaction is composed of two sequential steps, AdoMet formation and the subsequent tripolyphosphate hydrolysis which occurs prior to release of AdoMet from the enzyme. In Proteus mirabilis (strain HI4320), this protein is S-adenosylmethionine synthase.